The sequence spans 342 residues: Succinylglutamate desuccinylase (342 aa).

3 residues coordinate Zn(2+): His63, Glu66, and His155. Residue Glu219 is part of the active site.

The protein belongs to the AspA/AstE family. Succinylglutamate desuccinylase subfamily. Requires Zn(2+) as cofactor.

It catalyses the reaction N-succinyl-L-glutamate + H2O = L-glutamate + succinate. Its pathway is amino-acid degradation; L-arginine degradation via AST pathway; L-glutamate and succinate from L-arginine: step 5/5. In terms of biological role, transforms N(2)-succinylglutamate into succinate and glutamate. The protein is Succinylglutamate desuccinylase of Vibrio cholerae serotype O1 (strain ATCC 39541 / Classical Ogawa 395 / O395).